Reading from the N-terminus, the 726-residue chain is Probable cadmium-transporting ATPase (726 aa).

An HMA domain is found at 11–74 (DKQVYRVEGF…AGAFENLKVF (64 aa)). Cd(2+) contacts are provided by Cys-22 and Cys-25. Transmembrane regions (helical) follow at residues 105–125 (STLLFATLLIAFGYLSHFVNG), 129–149 (LVTSMLFVGSIVIGGYSLFKV), 163–179 (TLMTVAVIGAAIIGEWA), 335–355 (IIMVIAALVAVVPPLFFGGSW), and 363–383 (LAVLVVGCPCALVISTPISIV). The active-site 4-aspartylphosphate intermediate is Asp-414. A run of 2 helical transmembrane segments spans residues 671 to 693 (LNIIKANITFAIGIKIIALLLVI) and 698 to 720 (TLWIAILSDMGATILVALNSLRL).

It belongs to the cation transport ATPase (P-type) (TC 3.A.3) family. Type IB subfamily.

It is found in the cell membrane. The catalysed reaction is Cd(2+)(in) + ATP + H2O = Cd(2+)(out) + ADP + phosphate + H(+). Its function is as follows. Couples the hydrolysis of ATP with the export of cadmium. The polypeptide is Probable cadmium-transporting ATPase (cadA) (Staphylococcus aureus (strain MRSA252)).